An 853-amino-acid polypeptide reads, in one-letter code: Envelope glycoprotein gp160 (853 aa).

A signal peptide spans 1–31 (MRVRGIERNCQNLWKWGIMLLGILMTCSNAD). The Extracellular segment spans residues 32 to 681 (NLWVTVYYGV…ITQWLWYIKI (650 aa)). A disulfide bridge connects residues C53 and C73. 14 N-linked (GlcNAc...) asparagine; by host glycosylation sites follow: N87, N137, N144, N153, N157, N185, N188, N198, N235, N242, N263, N277, N290, and N296. Cystine bridges form between C118–C206, C125–C197, C130–C154, C219–C248, and C229–C240. Positions 130 to 153 (CIDEVMENVTMKNNNVTEEIRMKN) are V1. The tract at residues 154–197 (CSFNITTVVRDKTKQVHALFYRLDIVPIDNDNSTNSTNYRLINC) is V2. Positions 297–329 (CTRPYRNIRQRTSIGLGQALYTTKTRSIIGQAY) are V3. C297 and C330 are joined by a disulfide. 3 N-linked (GlcNAc...) asparagine; by host glycosylation sites follow: N331, N338, and N353. Residues 362-372 (SSGGDPEITTH) form a CD4-binding loop region. Disulfide bonds link C376/C442 and C383/C415. Residues 383–415 (CNTSGLFNSTWDISKSEWANSTESDDKPITLQC) form a V4 region. Residues N384, N390, N402, N441, N445, N458, N459, and N462 are each glycosylated (N-linked (GlcNAc...) asparagine; by host). 2 V5 regions span residues 457–468 (TNNSSNETFRPG) and 460–468 (SSNETFRPG). A fusion peptide region spans residues 509–529 (AIGLGAMFLGFLGAAGSTMGA). The tract at residues 571-589 (KQLQARILAVERYLKDQQL) is immunosuppression. The cysteines at positions 595 and 601 are disulfide-linked. Residues N608, N613, N622, N634, and N671 are each glycosylated (N-linked (GlcNAc...) asparagine; by host). Residues 630–664 (REIDNYTGLIYRLIEESQTQQEKNEQELLELDKWA) are a coiled coil. Positions 659-680 (ELDKWASLWNWFNITQWLWYIK) are MPER; binding to GalCer. The helical transmembrane segment at 682-702 (FIMIVGGLIGLRIVFAVLSLV) threads the bilayer. Over 703 to 853 (NRVRQGYSPL…IRQGLERLLL (151 aa)) the chain is Cytoplasmic. The short motif at 709 to 712 (YSPL) is the YXXL motif; contains endocytosis signal element. S-palmitoyl cysteine; by host attachment occurs at residues C761 and C834. Residues 852-853 (LL) carry the Di-leucine internalization motif motif.

This sequence belongs to the HIV-1 env protein family. The mature envelope protein (Env) consists of a homotrimer of non-covalently associated gp120-gp41 heterodimers. The resulting complex protrudes from the virus surface as a spike. There seems to be as few as 10 spikes on the average virion. Interacts with host CD4, CCR5 and CXCR4. Gp120 also interacts with the C-type lectins CD209/DC-SIGN and CLEC4M/DC-SIGNR (collectively referred to as DC-SIGN(R)). Gp120 and gp41 interact with GalCer. Gp120 interacts with host ITGA4/ITGB7 complex; on CD4+ T-cells, this interaction results in rapid activation of integrin ITGAL/LFA-1, which facilitates efficient cell-to-cell spreading of HIV-1. Gp120 interacts with cell-associated heparan sulfate; this interaction increases virus infectivity on permissive cells and may be involved in infection of CD4- cells. As to quaternary structure, the mature envelope protein (Env) consists of a homotrimer of non-covalently associated gp120-gp41 heterodimers. The resulting complex protrudes from the virus surface as a spike. There seems to be as few as 10 spikes on the average virion. In terms of processing, highly glycosylated by host. The high number of glycan on the protein is reffered to as 'glycan shield' because it contributes to hide protein sequence from adaptive immune system. Palmitoylation of the transmembrane protein and of Env polyprotein (prior to its proteolytic cleavage) is essential for their association with host cell membrane lipid rafts. Palmitoylation is therefore required for envelope trafficking to classical lipid rafts, but not for viral replication. Post-translationally, specific enzymatic cleavages in vivo yield mature proteins. Envelope glycoproteins are synthesized as an inactive precursor that is heavily N-glycosylated and processed likely by host cell furin in the Golgi to yield the mature SU and TM proteins. The cleavage site between SU and TM requires the minimal sequence [KR]-X-[KR]-R. About 2 of the 9 disulfide bonds of gp41 are reduced by P4HB/PDI, following binding to CD4 receptor.

Its subcellular location is the virion membrane. It is found in the host cell membrane. It localises to the host endosome membrane. Functionally, oligomerizes in the host endoplasmic reticulum into predominantly trimers. In a second time, gp160 transits in the host Golgi, where glycosylation is completed. The precursor is then proteolytically cleaved in the trans-Golgi and thereby activated by cellular furin or furin-like proteases to produce gp120 and gp41. Its function is as follows. Attaches the virus to the host lymphoid cell by binding to the primary receptor CD4. This interaction induces a structural rearrangement creating a high affinity binding site for a chemokine coreceptor like CXCR4 and/or CCR5. Acts as a ligand for CD209/DC-SIGN and CLEC4M/DC-SIGNR, which are respectively found on dendritic cells (DCs), and on endothelial cells of liver sinusoids and lymph node sinuses. These interactions allow capture of viral particles at mucosal surfaces by these cells and subsequent transmission to permissive cells. HIV subverts the migration properties of dendritic cells to gain access to CD4+ T-cells in lymph nodes. Virus transmission to permissive T-cells occurs either in trans (without DCs infection, through viral capture and transmission), or in cis (following DCs productive infection, through the usual CD4-gp120 interaction), thereby inducing a robust infection. In trans infection, bound virions remain infectious over days and it is proposed that they are not degraded, but protected in non-lysosomal acidic organelles within the DCs close to the cell membrane thus contributing to the viral infectious potential during DCs' migration from the periphery to the lymphoid tissues. On arrival at lymphoid tissues, intact virions recycle back to DCs' cell surface allowing virus transmission to CD4+ T-cells. In terms of biological role, acts as a class I viral fusion protein. Under the current model, the protein has at least 3 conformational states: pre-fusion native state, pre-hairpin intermediate state, and post-fusion hairpin state. During fusion of viral and target intracellular membranes, the coiled coil regions (heptad repeats) assume a trimer-of-hairpins structure, positioning the fusion peptide in close proximity to the C-terminal region of the ectodomain. The formation of this structure appears to drive apposition and subsequent fusion of viral and target cell membranes. Complete fusion occurs in host cell endosomes and is dynamin-dependent, however some lipid transfer might occur at the plasma membrane. The virus undergoes clathrin-dependent internalization long before endosomal fusion, thus minimizing the surface exposure of conserved viral epitopes during fusion and reducing the efficacy of inhibitors targeting these epitopes. Membranes fusion leads to delivery of the nucleocapsid into the cytoplasm. The chain is Envelope glycoprotein gp160 from Homo sapiens (Human).